The primary structure comprises 323 residues: tRNA U34 carboxymethyltransferase (323 aa).

Residues lysine 91, tryptophan 105, lysine 110, glycine 130, 152 to 154 (DPT), 181 to 182 (IE), methionine 196, tyrosine 200, and arginine 315 contribute to the carboxy-S-adenosyl-L-methionine site.

It belongs to the class I-like SAM-binding methyltransferase superfamily. CmoB family. In terms of assembly, homotetramer.

The catalysed reaction is carboxy-S-adenosyl-L-methionine + 5-hydroxyuridine(34) in tRNA = 5-carboxymethoxyuridine(34) in tRNA + S-adenosyl-L-homocysteine + H(+). Catalyzes carboxymethyl transfer from carboxy-S-adenosyl-L-methionine (Cx-SAM) to 5-hydroxyuridine (ho5U) to form 5-carboxymethoxyuridine (cmo5U) at position 34 in tRNAs. The polypeptide is tRNA U34 carboxymethyltransferase (Escherichia coli O81 (strain ED1a)).